Here is a 548-residue protein sequence, read N- to C-terminus: Leucine-rich repeat-containing protein 56 (548 aa).

LRR repeat units follow at residues 94 to 115 (NLIQ…GTSL), 117 to 138 (QLQV…GSFL), 139 to 160 (ALKE…CLLE), 161 to 182 (QLEV…RYLQ), and 186 to 206 (RLTT…PGPS). An LRRCT domain is found at 207–249 (NKAPQDYNYRAEVKKLIPQLHILDEVPTTCTNLPAPQKLSQDW). A disordered region spans residues 405 to 433 (LTHVQAQDPQKAPIEQEDQTGPKTSLTPL).

It belongs to the LRRC56 family. In terms of assembly, interacts with IFT88.

The protein resides in the cell projection. It localises to the cilium. In terms of biological role, required for the assembly of dynein arms. The protein is Leucine-rich repeat-containing protein 56 (Lrrc56) of Rattus norvegicus (Rat).